The sequence spans 140 residues: 3-hydroxyacyl-[acyl-carrier-protein] dehydratase FabZ (140 aa).

H48 is a catalytic residue.

It belongs to the thioester dehydratase family. FabZ subfamily.

It is found in the cytoplasm. The catalysed reaction is a (3R)-hydroxyacyl-[ACP] = a (2E)-enoyl-[ACP] + H2O. Functionally, involved in unsaturated fatty acids biosynthesis. Catalyzes the dehydration of short chain beta-hydroxyacyl-ACPs and long chain saturated and unsaturated beta-hydroxyacyl-ACPs. The polypeptide is 3-hydroxyacyl-[acyl-carrier-protein] dehydratase FabZ (Caldicellulosiruptor bescii (strain ATCC BAA-1888 / DSM 6725 / KCTC 15123 / Z-1320) (Anaerocellum thermophilum)).